We begin with the raw amino-acid sequence, 828 residues long: MKLSRRSFMKANAVAAAAAAAGLSVPGVARAVVGQQEAIKWDKAPCRFCGTGCGVLVGTQQGRVVACQGDPDAPVNRGLNCIKGYFLPKIMYGKDRLTQPMLRMKDGSYHKDGEFTPVSWEQAFDVMEEKFKTSLKEKGPEAIGMFGSGQWTIWEGYAAAKLFKAGFRSNNIDPNARHCMASAVVGFMRTFGMDEPMGCYDDIEQADAFVLWGSNMAEMHPILWSRITNRRLSDPNVKVAVLSTFQHRSFELADNGIVFTPQSDLVILNYIANYIIQNNAVNQDFFTKHVNLRKGATDIGYGLRPTHPLEKAAKNPGSDASEPMSFDEYKAFVAEYTLDKTAEMTGVPKDQLEQLAQLYADPNKRVISYWTMGFNQHTRGVWANNLVYNLHLLTGKISQPGCGPFSLTGQPSACGTAREVGTFSHRLPADMVVTNEKHRDICEKHWQIPAGTIPAKVGLHAVAQDRALKDGKLNVYWVMCNNNMQAGPNINEDRMPGWRDPRNFIIVSDPYPTVSALSADLILPTAMWVEKEGAYGNAERRTQFWRQQIKAPGEAKSDLWQLVQFSRRFKTEEVWPEALLAQKPELRGKTLYDVLFATPAVSKFPLSELKEDQLNDESRELGFYLQKGLFEEYAWFGRGHGHDLAPFDDYHNARGLRWPVVEGKETQWRYSEGNDPYVKAGEGYKFYGKPDGKAVIFALPFEPAAESPDNEYDLWLSTGRVLEHWHTGSMTRRVLELHRAFPEAVVFIHPLDAKARDLRRGDKVKVSSRRGEVISIVETRGRNRPPQGLVYMPFFDAAQLVNNLTLDATDPLSKETDFKKCAVKLAKV.

A signal peptide (tat-type signal) is located at residues 1-31 (MKLSRRSFMKANAVAAAAAAAGLSVPGVARA). Residues 39–95 (IKWDKAPCRFCGTGCGVLVGTQQGRVVACQGDPDAPVNRGLNCIKGYFLPKIMYGKD) enclose the 4Fe-4S Mo/W bis-MGD-type domain. The [4Fe-4S] cluster site is built by Cys46, Cys49, Cys53, and Cys81. Mo-bis(molybdopterin guanine dinucleotide) is bound by residues Lys83, Gln150, Asn175, Cys179, 212–219 (WGSNMAEM), 243–247 (STFQH), 262–264 (QSD), Met372, Gln376, Asn482, 508–509 (SD), Lys531, Asp558, and 718–727 (TGRVLEHWHT). Residue Phe794 participates in substrate binding. Residues Asn802 and Lys819 each coordinate Mo-bis(molybdopterin guanine dinucleotide).

Belongs to the prokaryotic molybdopterin-containing oxidoreductase family. NasA/NapA/NarB subfamily. Component of the periplasmic nitrate reductase NapAB complex composed of NapA and NapB. The cofactor is [4Fe-4S] cluster. Mo-bis(molybdopterin guanine dinucleotide) serves as cofactor. In terms of processing, predicted to be exported by the Tat system. The position of the signal peptide cleavage has not been experimentally proven.

The protein resides in the periplasm. The catalysed reaction is 2 Fe(II)-[cytochrome] + nitrate + 2 H(+) = 2 Fe(III)-[cytochrome] + nitrite + H2O. In terms of biological role, catalytic subunit of the periplasmic nitrate reductase complex NapAB. Receives electrons from NapB and catalyzes the reduction of nitrate to nitrite. In Salmonella paratyphi C (strain RKS4594), this protein is Periplasmic nitrate reductase.